An 835-amino-acid chain; its full sequence is Phenylalanine--tRNA ligase beta subunit (835 aa).

Positions 44–158 (GPVDGPLTVG…LPGADGADVL (115 aa)) constitute a tRNA-binding domain. One can recognise a B5 domain in the interval 414-493 (WSLPPIRIAV…RLEGLEVIRS (80 aa)). Residues aspartate 471, aspartate 477, glutamate 480, and glutamate 481 each contribute to the Mg(2+) site. An FDX-ACB domain is found at 741–834 (SPFPAVLQDV…AAERVGATLR (94 aa)).

The protein belongs to the phenylalanyl-tRNA synthetase beta subunit family. Type 1 subfamily. As to quaternary structure, tetramer of two alpha and two beta subunits. Mg(2+) is required as a cofactor.

It is found in the cytoplasm. It catalyses the reaction tRNA(Phe) + L-phenylalanine + ATP = L-phenylalanyl-tRNA(Phe) + AMP + diphosphate + H(+). In Mycobacterium leprae (strain TN), this protein is Phenylalanine--tRNA ligase beta subunit.